The primary structure comprises 685 residues: Translation initiation factor IF-2 (685 aa).

In terms of domain architecture, tr-type G spans 185 to 354 (KRPPVVTVMG…LLTAEMQELK (170 aa)). The segment at 194-201 (GHVDHGKT) is G1. 194–201 (GHVDHGKT) provides a ligand contact to GTP. Positions 219 to 223 (GITQH) are G2. Positions 240–243 (DTPG) are G3. GTP contacts are provided by residues 240 to 244 (DTPGH) and 294 to 297 (NKMD). A G4 region spans residues 294–297 (NKMD). The segment at 330 to 332 (SAH) is G5.

It belongs to the TRAFAC class translation factor GTPase superfamily. Classic translation factor GTPase family. IF-2 subfamily.

It localises to the cytoplasm. In terms of biological role, one of the essential components for the initiation of protein synthesis. Protects formylmethionyl-tRNA from spontaneous hydrolysis and promotes its binding to the 30S ribosomal subunits. Also involved in the hydrolysis of GTP during the formation of the 70S ribosomal complex. The chain is Translation initiation factor IF-2 from Clostridium tetani (strain Massachusetts / E88).